Here is a 416-residue protein sequence, read N- to C-terminus: Glyceraldehyde-3-phosphate dehydrogenase, chloroplastic (416 aa).

The N-terminal 78 residues, 1–78, are a transit peptide targeting the chloroplast; the sequence is MAFVAPVSSV…APARTSNAPS (78 aa). NADP(+)-binding positions include 90–91, Asp114, and Arg158; that span reads RI. Residues 232–234, Thr263, Arg278, 291–292, and Arg314 each bind D-glyceraldehyde 3-phosphate; these read SCT and TG. The active-site Nucleophile is Cys233. NADP(+) is bound at residue Asn396.

The protein belongs to the glyceraldehyde-3-phosphate dehydrogenase family. In terms of assembly, homotetramer.

It localises to the plastid. It is found in the chloroplast. The enzyme catalyses D-glyceraldehyde 3-phosphate + phosphate + NADP(+) = (2R)-3-phospho-glyceroyl phosphate + NADPH + H(+). The protein operates within carbohydrate biosynthesis; Calvin cycle. The protein is Glyceraldehyde-3-phosphate dehydrogenase, chloroplastic (GAPA) of Gracilaria gracilis (Red alga).